Consider the following 346-residue polypeptide: Very-long-chain 3-oxoacyl-CoA reductase (346 aa).

Residues 19-39 (VLLGALLVGVFKLTVFILSVT) form a helical membrane-spanning segment. Valine 65, aspartate 119, asparagine 146, tyrosine 220, lysine 224, valine 253, and serine 255 together coordinate NADP(+). The active-site Proton donor is tyrosine 220. The active-site Lowers pKa of active site Tyr is the lysine 224.

Belongs to the short-chain dehydrogenases/reductases (SDR) family.

It localises to the endoplasmic reticulum membrane. The catalysed reaction is a very-long-chain (3R)-3-hydroxyacyl-CoA + NADP(+) = a very-long-chain 3-oxoacyl-CoA + NADPH + H(+). Its pathway is lipid metabolism; fatty acid biosynthesis. In terms of biological role, component of the microsomal membrane bound fatty acid elongation system, which produces the 26-carbon very long-chain fatty acids (VLCFA) from palmitate. Catalyzes the reduction of the 3-ketoacyl-CoA intermediate that is formed in each cycle of fatty acid elongation. VLCFAs serve as precursors for ceramide and sphingolipids. The chain is Very-long-chain 3-oxoacyl-CoA reductase from Scheffersomyces stipitis (strain ATCC 58785 / CBS 6054 / NBRC 10063 / NRRL Y-11545) (Yeast).